The sequence spans 99 residues: UPF0473 protein Athe_1150 (99 aa).

Belongs to the UPF0473 family.

This is UPF0473 protein Athe_1150 from Caldicellulosiruptor bescii (strain ATCC BAA-1888 / DSM 6725 / KCTC 15123 / Z-1320) (Anaerocellum thermophilum).